We begin with the raw amino-acid sequence, 304 residues long: Acetyl-coenzyme A carboxylase carboxyl transferase subunit beta (304 aa).

The region spanning 25–294 (VWTKCDSCGQ…PSVVESKADT (270 aa)) is the CoA carboxyltransferase N-terminal domain. Positions 29, 32, 48, and 51 each coordinate Zn(2+). The C4-type zinc-finger motif lies at 29-51 (CDSCGQVLYRAELERNLEVCPKC).

Belongs to the AccD/PCCB family. In terms of assembly, acetyl-CoA carboxylase is a heterohexamer composed of biotin carboxyl carrier protein (AccB), biotin carboxylase (AccC) and two subunits each of ACCase subunit alpha (AccA) and ACCase subunit beta (AccD). It depends on Zn(2+) as a cofactor.

It is found in the cytoplasm. It catalyses the reaction N(6)-carboxybiotinyl-L-lysyl-[protein] + acetyl-CoA = N(6)-biotinyl-L-lysyl-[protein] + malonyl-CoA. It participates in lipid metabolism; malonyl-CoA biosynthesis; malonyl-CoA from acetyl-CoA: step 1/1. Functionally, component of the acetyl coenzyme A carboxylase (ACC) complex. Biotin carboxylase (BC) catalyzes the carboxylation of biotin on its carrier protein (BCCP) and then the CO(2) group is transferred by the transcarboxylase to acetyl-CoA to form malonyl-CoA. The sequence is that of Acetyl-coenzyme A carboxylase carboxyl transferase subunit beta from Yersinia pestis (strain Pestoides F).